The following is a 224-amino-acid chain: Uridylate kinase (224 aa).

9-10 is an ATP binding site; it reads GS. Residue Gly43 participates in UMP binding. The ATP site is built by Gly44 and Arg48. Residues Asp65 and 113-119 each bind UMP; that span reads TEPAHST. ATP-binding residues include Thr139, Tyr145, and Asp148.

It belongs to the UMP kinase family. Homohexamer.

It is found in the cytoplasm. It catalyses the reaction UMP + ATP = UDP + ADP. Its pathway is pyrimidine metabolism; CTP biosynthesis via de novo pathway; UDP from UMP (UMPK route): step 1/1. Its activity is regulated as follows. Inhibited by UTP. Catalyzes the reversible phosphorylation of UMP to UDP. In Methanothermobacter thermautotrophicus (strain ATCC 29096 / DSM 1053 / JCM 10044 / NBRC 100330 / Delta H) (Methanobacterium thermoautotrophicum), this protein is Uridylate kinase.